The primary structure comprises 365 residues: Aminomethyltransferase (365 aa).

The protein belongs to the GcvT family. In terms of assembly, the glycine cleavage system is composed of four proteins: P, T, L and H.

The catalysed reaction is N(6)-[(R)-S(8)-aminomethyldihydrolipoyl]-L-lysyl-[protein] + (6S)-5,6,7,8-tetrahydrofolate = N(6)-[(R)-dihydrolipoyl]-L-lysyl-[protein] + (6R)-5,10-methylene-5,6,7,8-tetrahydrofolate + NH4(+). Its function is as follows. The glycine cleavage system catalyzes the degradation of glycine. The polypeptide is Aminomethyltransferase (Aeromonas hydrophila subsp. hydrophila (strain ATCC 7966 / DSM 30187 / BCRC 13018 / CCUG 14551 / JCM 1027 / KCTC 2358 / NCIMB 9240 / NCTC 8049)).